Consider the following 157-residue polypeptide: Phosphopantetheine adenylyltransferase (157 aa).

Residue S9 participates in substrate binding. ATP contacts are provided by residues 9-10 (SF) and H17. Substrate contacts are provided by K41, T73, and R87. Residues 88–90 (GIR), E98, and 122–128 (YQDISSS) each bind ATP.

Belongs to the bacterial CoaD family. As to quaternary structure, homohexamer. Mg(2+) serves as cofactor.

It localises to the cytoplasm. The enzyme catalyses (R)-4'-phosphopantetheine + ATP + H(+) = 3'-dephospho-CoA + diphosphate. The protein operates within cofactor biosynthesis; coenzyme A biosynthesis; CoA from (R)-pantothenate: step 4/5. In terms of biological role, reversibly transfers an adenylyl group from ATP to 4'-phosphopantetheine, yielding dephospho-CoA (dPCoA) and pyrophosphate. This chain is Phosphopantetheine adenylyltransferase, found in Oenococcus oeni (strain ATCC BAA-331 / PSU-1).